Here is a 471-residue protein sequence, read N- to C-terminus: 7-hydroxymethyl chlorophyll a reductase, chloroplastic (471 aa).

A chloroplast-targeting transit peptide spans 1–44 (MARCISFLSTSSSLPCATKPPCCSVSSVLPSSPSSHQCRGRKTS).

The protein belongs to the FrhB family. FAD serves as cofactor. It depends on iron-sulfur cluster as a cofactor.

Its subcellular location is the plastid. The protein resides in the chloroplast. It catalyses the reaction chlorophyll a + 2 oxidized [2Fe-2S]-[ferredoxin] + H2O = 7(1)-hydroxychlorophyll a + 2 reduced [2Fe-2S]-[ferredoxin] + 2 H(+). Functionally, probable iron-sulfur flavoprotein that converts 7-hydroxymethyl chlorophyll a to chlorophyll a using ferredoxin as a reducing equivalent. Catalyzes the reduction of a hydroxymethyl group to a methyl group. The sequence is that of 7-hydroxymethyl chlorophyll a reductase, chloroplastic (HCAR) from Oryza sativa subsp. japonica (Rice).